The primary structure comprises 132 residues: Small ribosomal subunit protein uS8 (132 aa).

It belongs to the universal ribosomal protein uS8 family. In terms of assembly, part of the 30S ribosomal subunit. Contacts proteins S5 and S12.

In terms of biological role, one of the primary rRNA binding proteins, it binds directly to 16S rRNA central domain where it helps coordinate assembly of the platform of the 30S subunit. The sequence is that of Small ribosomal subunit protein uS8 from Halalkalibacterium halodurans (strain ATCC BAA-125 / DSM 18197 / FERM 7344 / JCM 9153 / C-125) (Bacillus halodurans).